The sequence spans 161 residues: Small ribosomal subunit protein uS9 (161 aa).

This sequence belongs to the universal ribosomal protein uS9 family.

This chain is Small ribosomal subunit protein uS9, found in Rickettsia felis (strain ATCC VR-1525 / URRWXCal2) (Rickettsia azadi).